The primary structure comprises 281 residues: Pantothenate synthetase (281 aa).

ATP is bound at residue 30 to 37 (MGNLHLGH). H37 serves as the catalytic Proton donor. Residue Q61 participates in (R)-pantoate binding. Q61 contributes to the beta-alanine binding site. 149 to 152 (GRKD) lines the ATP pocket. Q155 contacts (R)-pantoate. ATP contacts are provided by residues I178 and 186–189 (MSSR).

This sequence belongs to the pantothenate synthetase family. As to quaternary structure, homodimer.

It is found in the cytoplasm. It carries out the reaction (R)-pantoate + beta-alanine + ATP = (R)-pantothenate + AMP + diphosphate + H(+). The protein operates within cofactor biosynthesis; (R)-pantothenate biosynthesis; (R)-pantothenate from (R)-pantoate and beta-alanine: step 1/1. Functionally, catalyzes the condensation of pantoate with beta-alanine in an ATP-dependent reaction via a pantoyl-adenylate intermediate. This is Pantothenate synthetase from Shewanella woodyi (strain ATCC 51908 / MS32).